Reading from the N-terminus, the 372-residue chain is F-box/kelch-repeat protein At4g14905 (372 aa).

The F-box domain maps to 34-74 (LHDEIAVSCFARVPRCYYPAISLVCRNFRRLMASPEIYIER). 3 Kelch repeats span residues 137–183 (ETYV…LIDG), 184–229 (KLYV…FFVM), and 232–280 (KIYR…CMNQ).

This is F-box/kelch-repeat protein At4g14905 from Arabidopsis thaliana (Mouse-ear cress).